Consider the following 83-residue polypeptide: Bowman-Birk type seed trypsin and chymotrypsin inhibitor (83 aa).

Disulfide bonds link C18–C72, C19–C34, C22–C68, C24–C32, C42–C49, C46–C61, and C51–C59.

This sequence belongs to the Bowman-Birk serine protease inhibitor family.

The sequence is that of Bowman-Birk type seed trypsin and chymotrypsin inhibitor from Vigna unguiculata (Cowpea).